The primary structure comprises 178 residues: MDSQGPIILEKSIKIEEVIKIANTSIIDIVTKTVTPEIKAPYELVDVEYDKMGSDYILSILVDKEGGITVEDTSDLTNIISPLLDTIDPDPFPNQYMLEVSSPGLERPLKTADSLKAAVGSYINVSLYQAIDKVKVFQGDLLAFDGETLTIDYLDKTRHKIVNIPYQVVAKVRMAVKL.

This sequence belongs to the RimP family.

Its subcellular location is the cytoplasm. Its function is as follows. Required for maturation of 30S ribosomal subunits. In Streptococcus pyogenes serotype M5 (strain Manfredo), this protein is Ribosome maturation factor RimP.